The primary structure comprises 350 residues: Secreted effector protein PipB2 (350 aa).

4 consecutive Pentapeptide repeat domains span residues 162 to 201, 202 to 241, 247 to 286, and 287 to 326; these read ANLTAENLCDADLSGADLEGAILFMADCDGANFKGANLSG, ASLGDSNLTNACLEDSIMCGATLDRANLTGANLQHTSLLG, CNCSGANMDHANVSGSTLIRADMSGATLKGATIMAAIMEG, and AVLTRANLQKASFTATNLDGADLSEANLRNTSFKDCTLTD.

Interacts with the host kinesin light chain (KLC), a subunit of the kinesin-1 motor complex.

The protein localises to the secreted. Its subcellular location is the host membrane. In terms of biological role, effector proteins function to alter host cell physiology and promote bacterial survival in host tissues. Involved in the reorganization of late endosome/lysosome (LE/Lys) compartments in mammalian cells. Necessary and sufficient to link kinesin-1 onto the Salmonella-containing vacuole (SCV) membrane. Required for centrifugal extension of lysosomal glycoprotein-rich membrane tubules, known as Salmonella-induced filaments (Sifs), away from the SCV and toward the cell periphery. Required for virulence, but not for intracellular survival and replication in phagocytic cells. This chain is Secreted effector protein PipB2 (pipB2), found in Salmonella typhi.